An 89-amino-acid polypeptide reads, in one-letter code: Small ribosomal subunit protein uS15 (89 aa).

The protein belongs to the universal ribosomal protein uS15 family. In terms of assembly, part of the 30S ribosomal subunit. Forms a bridge to the 50S subunit in the 70S ribosome, contacting the 23S rRNA.

In terms of biological role, one of the primary rRNA binding proteins, it binds directly to 16S rRNA where it helps nucleate assembly of the platform of the 30S subunit by binding and bridging several RNA helices of the 16S rRNA. Forms an intersubunit bridge (bridge B4) with the 23S rRNA of the 50S subunit in the ribosome. This chain is Small ribosomal subunit protein uS15, found in Aliivibrio salmonicida (strain LFI1238) (Vibrio salmonicida (strain LFI1238)).